A 231-amino-acid chain; its full sequence is tRNA (guanine-N(1)-)-methyltransferase (231 aa).

S-adenosyl-L-methionine-binding positions include glycine 114 and isoleucine 134–leucine 139.

It belongs to the RNA methyltransferase TrmD family. Homodimer.

The protein resides in the cytoplasm. The catalysed reaction is guanosine(37) in tRNA + S-adenosyl-L-methionine = N(1)-methylguanosine(37) in tRNA + S-adenosyl-L-homocysteine + H(+). Its function is as follows. Specifically methylates guanosine-37 in various tRNAs. The protein is tRNA (guanine-N(1)-)-methyltransferase of Clostridioides difficile (strain 630) (Peptoclostridium difficile).